Here is a 428-residue protein sequence, read N- to C-terminus: Glutamate-1-semialdehyde 2,1-aminomutase (428 aa).

N6-(pyridoxal phosphate)lysine is present on K265.

Belongs to the class-III pyridoxal-phosphate-dependent aminotransferase family. HemL subfamily. As to quaternary structure, homodimer. Pyridoxal 5'-phosphate is required as a cofactor.

Its subcellular location is the cytoplasm. The enzyme catalyses (S)-4-amino-5-oxopentanoate = 5-aminolevulinate. It participates in porphyrin-containing compound metabolism; protoporphyrin-IX biosynthesis; 5-aminolevulinate from L-glutamyl-tRNA(Glu): step 2/2. This chain is Glutamate-1-semialdehyde 2,1-aminomutase, found in Shewanella woodyi (strain ATCC 51908 / MS32).